The chain runs to 1020 residues: Glucan endo-1,3-beta-D-glucosidase (1020 aa).

The signal sequence occupies residues 1–25 (MKGKNVQLLFALVVIILLFPTGASA). Residues 28–251 (HAVSVGKGSY…ADYIAIAKLP (224 aa)) form a beta-sandwich subdomain region. The GH81 domain occupies 28–722 (HAVSVGKGSY…HWIHNLAELG (695 aa)). Residues 252 to 350 (EKDGNMLAKF…EGKRFTTELT (99 aa)) are alpha/beta subdomain. The interval 360–722 (DLGDYDRERL…HWIHNLAELG (363 aa)) is (alpha/beta)6 barrel subdomain. (1,3-beta-D-glucosyl)n-binding residues include tyrosine 387, lysine 391, histidine 458, aspartate 466, histidine 470, aspartate 530, asparagine 540, glutamate 542, glutamate 546, glutamate 699, and arginine 704. Aspartate 466 is an active-site residue. Active-site residues include glutamate 542 and glutamate 546. Residues 771-790 (HSFNIGNGDGPTNPDPSEPD) are disordered. The region spanning 796–922 (ERIQAEAYDA…LMNVNWFVFR (127 aa)) is the CBM6 domain. Residues glutamate 812, tryptophan 825, aspartate 853, asparagine 878, aspartate 912, and asparagine 915 each contribute to the (1,3-beta-D-glucosyl)n site. Positions 928–1020 (NGDSHTHPDY…YTTEWFTYSR (93 aa)) constitute a CBM56 domain.

It belongs to the glycosyl hydrolase 81 family.

It localises to the secreted. The enzyme catalyses Hydrolysis of (1-&gt;3)-beta-D-glucosidic linkages in (1-&gt;3)-beta-D-glucans.. Cleaves internal linkages in 1,3-beta-glucan. May contribute to plant biomass degradation. The chain is Glucan endo-1,3-beta-D-glucosidase from Halalkalibacterium halodurans (strain ATCC BAA-125 / DSM 18197 / FERM 7344 / JCM 9153 / C-125) (Bacillus halodurans).